The sequence spans 198 residues: Putative 3-methyladenine DNA glycosylase (198 aa).

This sequence belongs to the DNA glycosylase MPG family.

The chain is Putative 3-methyladenine DNA glycosylase from Oceanobacillus iheyensis (strain DSM 14371 / CIP 107618 / JCM 11309 / KCTC 3954 / HTE831).